We begin with the raw amino-acid sequence, 241 residues long: Small ribosomal subunit protein bS6 (241 aa).

Basic residues predominate over residues 97–108 (KPKIRERNRKYT). Residues 97–241 (KPKIRERNRK…YNNKKPQSSN (145 aa)) form a disordered region. A compositionally biased stretch (basic and acidic residues) spans 109-118 (PRRDRFEKPN). Low complexity-rich tracts occupy residues 130–151 (QDQQ…QTSQ) and 161–182 (DDFQ…NQSG). The segment covering 189 to 202 (RQNQENIHQNSKNH) has biased composition (polar residues).

The protein belongs to the bacterial ribosomal protein bS6 family.

Functionally, binds together with bS18 to 16S ribosomal RNA. This Mesomycoplasma hyopneumoniae (strain 232) (Mycoplasma hyopneumoniae) protein is Small ribosomal subunit protein bS6.